We begin with the raw amino-acid sequence, 327 residues long: Lactosylceramide 4-alpha-galactosyltransferase (327 aa).

Residues 166-168 (DTD) carry the DXD motif motif.

This sequence belongs to the glycosyltransferase 32 family.

The protein resides in the golgi apparatus membrane. It carries out the reaction a beta-D-Gal-(1-&gt;4)-beta-D-Glc-(1&lt;-&gt;1)-Cer(d18:1(4E)) + UDP-alpha-D-galactose = a globoside Gb3Cer (d18:1(4E)) + UDP + H(+). It catalyses the reaction a beta-D-Gal-(1&lt;-&gt;1')-ceramide + UDP-alpha-D-galactose = alpha-D-Gal-(1-&gt;4)-beta-D-Gal-(1&lt;-&gt;1')-Cer + UDP + H(+). It participates in glycolipid biosynthesis. In terms of biological role, catalyzes the transfer of galactose from UDP-alpha-D-galactose to lactosylceramide/beta-D-galactosyl-(1-&gt;4)-beta-D-glucosyl-(1&lt;-&gt;1)-ceramide(d18:1(4E)) to produce globotriaosylceramide/globoside Gb3Cer (d18:1(4E)). Also able to transfer galactose to galactosylceramide/beta-D-Gal-(1&lt;-&gt;1')-Cer. Globoside Gb3Cer is a glycosphingolipid of the globo serie, one of the major types of neutral root structures of glycosphingolipids, that constitute a significant portion of mammalian cell membranes. This Gorilla gorilla gorilla (Western lowland gorilla) protein is Lactosylceramide 4-alpha-galactosyltransferase (A4GALT).